The chain runs to 507 residues: MNLLDPFMKMTDEQEKGLSGAPSPTMSEDSAGSPCPSGSGSDTENTRPQENTFPKGEPDLKKESEEDKFPVCIREAVSQVLKGYDWTLVPMPVRVNGSSKNKPHVKRPMNAFMVWAQAARRKLADQYPHLHNAELSKTLGKLWRLLNESEKRPFVEEAERLRVQHKKDHPDYKYQPRRRKSVKNGQAEAEEATEQTHISPNAIFKALQADSPHSSSGMSEVHSPGEHSGQSQGPPTPPTTPKTDVQAGKVDLKREGRPLAEGGRQPPIDFRDVDIGELSSDVISNIETFDVNEFDQYLPPNGHPGVPATHGQVSYTGSYGISSTAPTPATAGHVWMSKQQAPPPPPQQPPQAPQAPQAPPQQQAPPQPQQAPQQQQAHTLTTLSSEPGQSQRTHIKTEQLSPSHYSEQQQHSPQQISYSPFNLPHYNPSYPTITRSQYDYTDHQNSGSYYSHAAGQGSGLYSTFTYMNPAQRPMYTPIADTSGVPSIPQTHSPQHWEQPVYTQLTRP.

Disordered stretches follow at residues 1–67 (MNLL…SEED) and 160–250 (RLRV…AGKV). Positions 30–41 (SAGSPCPSGSGS) are enriched in low complexity. The segment covering 42–52 (DTENTRPQENT) has biased composition (polar residues). Composition is skewed to basic and acidic residues over residues 56 to 67 (GEPDLKKESEED) and 160 to 174 (RLRV…DYKY). The tract at residues 63 to 103 (ESEEDKFPVCIREAVSQVLKGYDWTLVPMPVRVNGSSKNKP) is dimerization (DIM). The interval 63 to 103 (ESEEDKFPVCIREAVSQVLKGYDWTLVPMPVRVNGSSKNKP) is PQA. S64 is subject to Phosphoserine. Residues 105-173 (VKRPMNAFMV…QHKKDHPDYK (69 aa)) constitute a DNA-binding region (HMG box). S211 carries the post-translational modification Phosphoserine. Residues 224–307 (PGEHSGQSQG…LPPNGHPGVP (84 aa)) are transactivation domain (TAM). 2 short sequence motifs (9aaTAD) span residues 275–284 (IGELSSDVIS) and 290–298 (DVNEFDQYL). Residues 335-429 (WMSKQQAPPP…PFNLPHYNPS (95 aa)) form a disordered region. A compositionally biased stretch (pro residues) spans 341 to 369 (APPPPPQQPPQAPQAPQAPPQQQAPPQPQ). The segment covering 378-420 (HTLTTLSSEPGQSQRTHIKTEQLSPSHYSEQQQHSPQQISYSP) has biased composition (polar residues). The interval 392–507 (RTHIKTEQLS…QPVYTQLTRP (116 aa)) is transactivation domain (TAC). K396 is covalently cross-linked (Glycyl lysine isopeptide (Lys-Gly) (interchain with G-Cter in ubiquitin)). A 9aaTAD 3 motif is present at residues 458-466 (SGLYSTFTY). The tract at residues 477 to 507 (PIADTSGVPSIPQTHSPQHWEQPVYTQLTRP) is disordered. Residues 483–507 (GVPSIPQTHSPQHWEQPVYTQLTRP) are compositionally biased toward polar residues.

Homodimer; homodimerization is required for activity. Interacts (via C-terminus) with ZNF219; forming a complex that binds to the COL2A1 promoter and activates COL2A1 expression. Interacts with DDRGK1. Interacts with EP300/p300. Interacts with beta-catenin (CTNNB1); inhibiting CTNNB1 activity by competing with the binding sites of TCF/LEF within CTNNB1. Post-translationally, acetylated; acetylation impairs nuclear localization and ability to transactivate expression of target genes. Deacetylated by SIRT1. Phosphorylation at Ser-64 and Ser-211 by PKA increases transcriptional activity and may help delay chondrocyte maturation downstream of PTHLH/PTHrP signaling. Phosphorylation at either Ser-64 or Ser-211 is required for sumoylation, but phosphorylation is not dependent on sumoylation. Phosphorylated on tyrosine residues; tyrosine dephosphorylation by PTPN11/SHP2 blocks SOX9 phosphorylation by PKA and subsequent SUMOylation. In terms of processing, sumoylated; phosphorylation at either Ser-64 or Ser-211 is required for sumoylation. Sumoylation is induced by BMP signaling pathway. Post-translationally, ubiquitinated; ubiquitination leads to proteasomal degradation and is negatively regulated by DDRGK1.

The protein localises to the nucleus. Functionally, transcription factor that plays a key role in chondrocytes differentiation and skeletal development. Specifically binds the 5'-ACAAAG-3' DNA motif present in enhancers and super-enhancers and promotes expression of genes important for chondrogenesis, including cartilage matrix protein-coding genes COL2A1, COL4A2, COL9A1, COL11A2 and ACAN, SOX5 and SOX6. Also binds to some promoter regions. Plays a central role in successive steps of chondrocyte differentiation. Absolutely required for precartilaginous condensation, the first step in chondrogenesis during which skeletal progenitors differentiate into prechondrocytes. Together with SOX5 and SOX6, required for overt chondrogenesis when condensed prechondrocytes differentiate into early stage chondrocytes, the second step in chondrogenesis. Later, required to direct hypertrophic maturation and block osteoblast differentiation of growth plate chondrocytes: maintains chondrocyte columnar proliferation, delays prehypertrophy and then prevents osteoblastic differentiation of chondrocytes by lowering beta-catenin (CTNNB1) signaling and RUNX2 expression. Also required for chondrocyte hypertrophy, both indirectly, by keeping the lineage fate of chondrocytes, and directly, by remaining present in upper hypertrophic cells and transactivating COL10A1 along with MEF2C. Low lipid levels are the main nutritional determinant for chondrogenic commitment of skeletal progenitor cells: when lipids levels are low, FOXO (FOXO1 and FOXO3) transcription factors promote expression of SOX9, which induces chondrogenic commitment and suppresses fatty acid oxidation. Mechanistically, helps, but is not required, to remove epigenetic signatures of transcriptional repression and deposit active promoter and enhancer marks at chondrocyte-specific genes. Acts in cooperation with the Hedgehog pathway-dependent GLI (GLI1 and GLI3) transcription factors. In addition to cartilage development, also acts as a regulator of proliferation and differentiation in epithelial stem/progenitor cells: involved in the lung epithelium during branching morphogenesis, by balancing proliferation and differentiation and regulating the extracellular matrix. Controls epithelial branching during kidney development. The sequence is that of Transcription factor SOX-9 from Rattus norvegicus (Rat).